Consider the following 260-residue polypeptide: MLEKVKNIIVVLSGKGGVGKSTVSTQLSLALRKNGFKVGLLDIDLCGPSVPYLLGLEGRDIFQCDEGWVPVYTDESQTLAVMSIGFLLKNREDPVIWRGPKKTMMIRQFLTDVRWDELDYLIIDTPPGTSDEHITVMECLKEVGCHGAIIVTTPQEVALDDVRKEITFCKKTSINILGIVENMSGFVCPHCTSCTNIFSSNGGTSLANYAQVPHLGTLPIDPRVGVLAGSTTSVLDELPDSTTAEVLTHIVEKLKTIFVS.

14–21 serves as a coordination point for ATP; the sequence is GKGGVGKS. The [4Fe-4S] cluster site is built by Cys188 and Cys191.

It belongs to the Mrp/NBP35 ATP-binding proteins family. NUBP2/CFD1 subfamily. In terms of assembly, heterotetramer of 2 Nubp1 and 2 Nubp2 chains. It depends on [4Fe-4S] cluster as a cofactor.

The protein resides in the cytoplasm. Functionally, component of the cytosolic iron-sulfur (Fe/S) protein assembly (CIA) machinery. Required for maturation of extramitochondrial Fe-S proteins. The Nubp1-Nubp2 heterotetramer forms a Fe-S scaffold complex, mediating the de novo assembly of an Fe-S cluster and its transfer to target apoproteins. In Drosophila yakuba (Fruit fly), this protein is Cytosolic Fe-S cluster assembly factor Nubp2 homolog 2.